A 477-amino-acid chain; its full sequence is E3 ubiquitin-protein ligase TRIM17 (477 aa).

The RING-type zinc-finger motif lies at 16–66 (CSICLDYFTDPVMTACGHNFCRECIQMSWEKGKGKKGKKKQKGSFPCPECR). Residues 94-135 (HKRDLCQIHQEPLKLFCQDDQTPICVVCREAQEHRMHRVLPL) form a B box-type zinc finger. Zn(2+)-binding residues include Cys99, His102, Cys121, and His127. The stretch at 135–225 (LDEAAREYKL…GKLQDSKASL (91 aa)) forms a coiled coil. Positions 276–475 (AIKTVCRVPG…MVISTVTMWV (200 aa)) constitute a B30.2/SPRY domain.

It belongs to the TRIM/RBCC family. In terms of assembly, interacts (via coiled coil) with TRIM44 (via coiled coil). Interacts with TRIM28; this interaction prevents TRIM28 activity on BCL2A1. Interacts with TRIM41; this interaction prevents TRIM41 activity on ZSCAN2. Interacts with BECN1. Interacts with NFATC3 and NFATC4; these interactions prevent NFATC3 and NFATC4 nuclear localization. Post-translationally, auto-ubiquitinated. In terms of tissue distribution, expressed almost exclusively in the testis.

Its subcellular location is the cytoplasm. The protein localises to the lysosome. The catalysed reaction is S-ubiquitinyl-[E2 ubiquitin-conjugating enzyme]-L-cysteine + [acceptor protein]-L-lysine = [E2 ubiquitin-conjugating enzyme]-L-cysteine + N(6)-ubiquitinyl-[acceptor protein]-L-lysine.. It participates in protein modification; protein ubiquitination. Functionally, E3 ubiquitin ligase that plays important roles in the regulation of neuronal apoptosis, selective autophagy or cell proliferation. Stimulates the degradation of kinetochore ZW10 interacting protein ZWINT in a proteasome-dependent manner, leading to negative regulation of cell proliferation. Inhibits autophagic degradation of diverse known targets while contributing to autophagy of midbodies. Autophagy-inhibitory activity involves MCL1, which TRIM17 assembles into complexes with the key autophagy regulator BECN1. Controls neuronal apoptosis by mediating ubiquitination and degradation of MCL1 to initiate neuronal death. In addition, regulates NFAT transcription factors NFATC3 and NFATC4 activities by preventing their nuclear localization, thus inhibiting their transcriptional activities. Decreases TRIM41-mediated degradation of ZSCAN2 thereby stimulating alpha-synuclein/SNCA transcription in neuronal cells. Prevents the E3 ubiquitin-ligase activity of TRIM28 and its interaction with anti-apoptotic BCL2A1, blocking TRIM28 from ubiquitinating BCL2A1. The polypeptide is E3 ubiquitin-protein ligase TRIM17 (Trim17) (Rattus norvegicus (Rat)).